We begin with the raw amino-acid sequence, 379 residues long: UDP-4-amino-4-deoxy-L-arabinose--oxoglutarate aminotransferase (379 aa).

An N6-(pyridoxal phosphate)lysine modification is found at lysine 182.

The protein belongs to the DegT/DnrJ/EryC1 family. ArnB subfamily. In terms of assembly, homodimer. Requires pyridoxal 5'-phosphate as cofactor.

The enzyme catalyses UDP-4-amino-4-deoxy-beta-L-arabinose + 2-oxoglutarate = UDP-beta-L-threo-pentopyranos-4-ulose + L-glutamate. It functions in the pathway nucleotide-sugar biosynthesis; UDP-4-deoxy-4-formamido-beta-L-arabinose biosynthesis; UDP-4-deoxy-4-formamido-beta-L-arabinose from UDP-alpha-D-glucuronate: step 2/3. Its pathway is bacterial outer membrane biogenesis; lipopolysaccharide biosynthesis. In terms of biological role, catalyzes the conversion of UDP-4-keto-arabinose (UDP-Ara4O) to UDP-4-amino-4-deoxy-L-arabinose (UDP-L-Ara4N). The modified arabinose is attached to lipid A and is required for resistance to polymyxin and cationic antimicrobial peptides. The sequence is that of UDP-4-amino-4-deoxy-L-arabinose--oxoglutarate aminotransferase from Erwinia tasmaniensis (strain DSM 17950 / CFBP 7177 / CIP 109463 / NCPPB 4357 / Et1/99).